Consider the following 89-residue polypeptide: Small ribosomal subunit protein uS15 (89 aa).

Belongs to the universal ribosomal protein uS15 family. As to quaternary structure, part of the 30S ribosomal subunit. Forms a bridge to the 50S subunit in the 70S ribosome, contacting the 23S rRNA.

In terms of biological role, one of the primary rRNA binding proteins, it binds directly to 16S rRNA where it helps nucleate assembly of the platform of the 30S subunit by binding and bridging several RNA helices of the 16S rRNA. Functionally, forms an intersubunit bridge (bridge B4) with the 23S rRNA of the 50S subunit in the ribosome. This chain is Small ribosomal subunit protein uS15, found in Chlorobaculum tepidum (strain ATCC 49652 / DSM 12025 / NBRC 103806 / TLS) (Chlorobium tepidum).